The chain runs to 701 residues: Interleukin-1 receptor accessory protein-like 1-A (701 aa).

Positions 1–19 are cleaved as a signal peptide; it reads MTALNPVLFLLCGVSVSLS. Topologically, residues 20–361 are extracellular; it reads LKVVSKRGSV…IGKRVELMYT (342 aa). One can recognise an Ig-like C2-type 1 domain in the interval 33–133; sequence TDWSVDYLKY…RNSTFCMKVS (101 aa). C54 and C121 form a disulfide bridge. Residues N64, N125, N141, N216, N267, and N334 are each glycosylated (N-linked (GlcNAc...) asparagine). Ig-like C2-type domains follow at residues 146–235 and 245–353; these read CYNS…TYLS and PRIL…VQIG. A disulfide bridge links C167 with C219. Residues C270 and C337 are joined by a disulfide bond. A helical transmembrane segment spans residues 362–382; sequence VELAGGLGAILLLLALLLSVY. Over 383–701 the chain is Cytoplasmic; sequence KCYRIELLLC…RETSISSVIW (319 aa). Positions 407-563 constitute a TIR domain; that stretch reads KEYDAYLSYS…RFWKQLRYTM (157 aa). The active site involves E495. The tract at residues 568–701 is required for synaptic vesicle accumulation during synaptogenesis; sequence PQQTITNHAL…RETSISSVIW (134 aa).

It belongs to the interleukin-1 receptor family.

Its subcellular location is the cell membrane. The protein localises to the cytoplasm. The catalysed reaction is NAD(+) + H2O = ADP-D-ribose + nicotinamide + H(+). May regulate secretion and presynaptic differentiation through inhibition of the activity of N-type voltage-gated calcium channel. During presynaptic differentiation may regulate both synaptic vesicle accumulation in axon terminals and subsequent axon terminal remodeling. The sequence is that of Interleukin-1 receptor accessory protein-like 1-A (il1rapl1a) from Danio rerio (Zebrafish).